The chain runs to 558 residues: Ubiquitin carboxyl-terminal hydrolase 30 homolog (558 aa).

A helical membrane pass occupies residues Ile6–Pro26. The 512-residue stretch at Ala39–Gly550 folds into the USP domain. Catalysis depends on Cys48, which acts as the Nucleophile. The tract at residues Leu267–Ser300 is disordered. A compositionally biased stretch (low complexity) spans Pro280–Gln289. The active-site Proton acceptor is His506.

This sequence belongs to the peptidase C19 family.

It is found in the mitochondrion outer membrane. The catalysed reaction is Thiol-dependent hydrolysis of ester, thioester, amide, peptide and isopeptide bonds formed by the C-terminal Gly of ubiquitin (a 76-residue protein attached to proteins as an intracellular targeting signal).. Functionally, deubiquitinating enzyme that acts as a key inhibitor of mitophagy by counteracting the action of parkin (park). This chain is Ubiquitin carboxyl-terminal hydrolase 30 homolog, found in Drosophila melanogaster (Fruit fly).